The sequence spans 139 residues: GSK3-beta interaction protein (139 aa).

Residues 1–22 (METDCNPMELSSMSGFEEGSEL) form a disordered region. The segment at 41-45 (VNDVL) is required for PRKAR2A interaction; contributes to a protective effect against H(2)O(2)-induced apoptosis. The tract at residues 115–139 (SPAYREAFGNALLQRLEALKRDGQS) is interaction with GSK3B and acts as a GSK3B inhibitor.

Belongs to the GSKIP family. In terms of assembly, forms a complex composed of PRKAR2A or PRKAR2B, GSK3B and GSKIP through GSKIP interaction; facilitates PKA-induced phosphorylation of GSK3B leading to GSK3B inactivation; recruits DNM1L through GSK3B for PKA-mediated phosphorylation of DNM1L; promotes beta-catenin degradation through GSK3B-induced phosphorylation of beta-catenin; stabilizes beta-catenin and enhances Wnt-induced signaling through PKA-induced phosphorylation of beta-catenin. Interacts with GSK3B; induces GSK3B-mediated phosphorylation of GSKIP and inhibits GSK3B kinase activity. In terms of processing, phosphorylated by GSK3B.

It is found in the cytoplasm. The protein resides in the nucleus. A-kinase anchoring protein for GSK3B and PKA that regulates or facilitates their kinase activity towards their targets. The ternary complex enhances Wnt-induced signaling by facilitating the GSK3B- and PKA-induced phosphorylation of beta-catenin leading to beta-catenin degradation and stabilization respectively. Upon cAMP activation, the ternary complex contributes to neuroprotection against oxidative stress-induced apoptosis by facilitating the PKA-induced phosphorylation of DML1 and PKA-induced inactivation of GSK3B. During neurite outgrowth promotes neuron proliferation; while increases beta-catenin-induced transcriptional activity through GSK3B kinase activity inhibition, reduces N-cadherin level to promote cell cycle progression. May play a role in cleft palate formation and is required for postnatal life through modulation of the activity of GSK3B during development. The chain is GSK3-beta interaction protein from Macaca fascicularis (Crab-eating macaque).